The chain runs to 422 residues: Glucose-1-phosphate adenylyltransferase (422 aa).

Residues tyrosine 109, glycine 175, 190-191 (EK), and serine 208 each bind alpha-D-glucose 1-phosphate.

Belongs to the bacterial/plant glucose-1-phosphate adenylyltransferase family. In terms of assembly, homotetramer.

It catalyses the reaction alpha-D-glucose 1-phosphate + ATP + H(+) = ADP-alpha-D-glucose + diphosphate. It participates in glycan biosynthesis; glycogen biosynthesis. Its function is as follows. Involved in the biosynthesis of ADP-glucose, a building block required for the elongation reactions to produce glycogen. Catalyzes the reaction between ATP and alpha-D-glucose 1-phosphate (G1P) to produce pyrophosphate and ADP-Glc. This is Glucose-1-phosphate adenylyltransferase from Shewanella amazonensis (strain ATCC BAA-1098 / SB2B).